The primary structure comprises 733 residues: Vinexin (733 aa).

4 disordered regions span residues 1–51 (MARI…SNLD), 129–165 (TWPGPGSRPSMSPKPPASQHAQNWSATWTKDSKRQDK), 224–285 (SARA…NQVP), and 352–448 (ETRL…KRKA). The segment covering 32–42 (DPNRVHTKEQL) has biased composition (basic and acidic residues). Polar residues predominate over residues 147 to 157 (QHAQNWSATWT). Residues 164–232 (DKRWVKYEGI…VSARASSAEP (69 aa)) form the SoHo domain. Polar residues-rich tracts occupy residues 245–256 (PGTTETSSGRNW) and 264–277 (RNTFNYNFRPSSSG). 2 positions are modified to phosphoserine: Ser412 and Ser459. 2 SH3 domains span residues 444–503 (KKRK…VLPA) and 518–579 (LEYG…INRE). The segment at 444 to 579 (KKRKAARLKF…PASYVQINRE (136 aa)) is binds to vinculin. The segment at 584-672 (LCDDGPQLPA…INLGPSSPNT (89 aa)) is disordered. Position 594 is a phosphoserine; by MAPK1 (Ser594). A compositionally biased stretch (low complexity) spans 597 to 613 (PTTTAHLSSHSHPSSIP). Ser607, Ser610, and Ser624 each carry phosphoserine. Residues 638-651 (EPRSQTQSLNTPGP) are compositionally biased toward polar residues. Residues 674-733 (IHWTPYRAMYQYRPQNEDELELREGDRVDVMQQCDDGWFVGVSRRTQKFGTFPGNYVAPV) form the SH3 3 domain. Positions 674 to 733 (IHWTPYRAMYQYRPQNEDELELREGDRVDVMQQCDDGWFVGVSRRTQKFGTFPGNYVAPV) are binds to SOS.

Interacts with vinculin by the first two SH3 domains and the proline rich region of vinculin. Binds to SOS (guanine nucleotide exchange factor of RAS and RAC), through its third SH3 domain. The formation of this complex is down-regulated by phosphorylation of SOS. Interacts with SAFB2, INPPL1/SHIP2 and SRCIN1. Interacts with DLG5 through its third SH3 domain. Interacts with SOCS7 and MAPK1/ERK2. Interacts with FASLG. Post-translationally, phosphorylated at Ser-594 by MAPK1/ERK2 during cell spreading.

The protein localises to the cell junction. It is found in the focal adhesion. The protein resides in the cytoplasm. Its subcellular location is the cytoskeleton. Its function is as follows. Promotes up-regulation of actin stress fiber formation. The polypeptide is Vinexin (Sorbs3) (Mus musculus (Mouse)).